The sequence spans 370 residues: F-box protein At3g20690 (370 aa).

The 45-residue stretch at M1–K45 folds into the F-box domain.

This is F-box protein At3g20690 from Arabidopsis thaliana (Mouse-ear cress).